Reading from the N-terminus, the 567-residue chain is Maltase A2 (567 aa).

The signal sequence occupies residues Met1 to Ala23. 3 N-linked (GlcNAc...) asparagine glycosylation sites follow: Asn30, Asn124, and Asn198. Asp226 (nucleophile) is an active-site residue. The active-site Proton donor is Glu298. N-linked (GlcNAc...) asparagine glycosylation occurs at Asn312.

This sequence belongs to the glycosyl hydrolase 13 family.

It carries out the reaction Hydrolysis of terminal, non-reducing (1-&gt;4)-linked alpha-D-glucose residues with release of alpha-D-glucose.. The chain is Maltase A2 (Mal-A2) from Drosophila melanogaster (Fruit fly).